A 347-amino-acid chain; its full sequence is 3-isopropylmalate dehydrogenase (347 aa).

Residues Arg-87, Arg-97, Arg-121, and Asp-212 each coordinate substrate. Mg(2+) is bound by residues Asp-212, Asp-236, and Asp-240. Residue Gly-272–Asp-284 coordinates NAD(+).

This sequence belongs to the isocitrate and isopropylmalate dehydrogenases family. LeuB type 2 subfamily. In terms of assembly, homodimer. Mg(2+) is required as a cofactor. Mn(2+) serves as cofactor.

Its subcellular location is the cytoplasm. It carries out the reaction (2R,3S)-3-isopropylmalate + NAD(+) = 4-methyl-2-oxopentanoate + CO2 + NADH. It functions in the pathway amino-acid biosynthesis; L-leucine biosynthesis; L-leucine from 3-methyl-2-oxobutanoate: step 3/4. Functionally, catalyzes the oxidation of 3-carboxy-2-hydroxy-4-methylpentanoate (3-isopropylmalate) to 3-carboxy-4-methyl-2-oxopentanoate. The product decarboxylates to 4-methyl-2 oxopentanoate. This is 3-isopropylmalate dehydrogenase from Saccharopolyspora erythraea (strain ATCC 11635 / DSM 40517 / JCM 4748 / NBRC 13426 / NCIMB 8594 / NRRL 2338).